Consider the following 380-residue polypeptide: Homeobox protein ceh-6 (380 aa).

Residues 1-25 are compositionally biased toward low complexity; that stretch reads MLIPSSSSIPSSLSASASDSEPSSL. Disordered stretches follow at residues 1-31, 167-190, and 265-286; these read MLIPSSSSIPSSLSASASDSEPSSLNGSGIS, SGSVSGAGGPHQPLSDISDDSEQT, and GSPNSTFEKMTGQAGRKRKKRT. Residues 187 to 261 form the POU-specific domain; the sequence is SEQTCPDDLE…LLFKWLEEAD (75 aa). Positions 281 to 340 form a DNA-binding region, homeobox; that stretch reads KRKKRTSIEVNVKSRLEFHFQSNQKPNAQEITQVAMELQLEKEVVRVWFCNRRQKEKRIA.

Belongs to the POU transcription factor family. Class-3 subfamily. Interacts with egl-27, sox-2 and sem-4. Interacts with wdr-5.1. As to expression, expressed in a series of neurons in the ring ganglia, excretory cell, dividing neuroblasts in the ventral cord and rectal cells.

The protein resides in the nucleus. Vital for embryonic development and essential for the proper function of the excretory cell. Required for the transdifferentiation of the Y rectal epithelial cell to the PDA motor neuron during larval development. In Caenorhabditis elegans, this protein is Homeobox protein ceh-6.